We begin with the raw amino-acid sequence, 184 residues long: Photosystem I assembly protein Ycf4 (184 aa).

2 consecutive transmembrane segments (helical) span residues 19-39 and 57-77; these read ISNF…LLVG and IIFF…LFIS.

Belongs to the Ycf4 family.

It is found in the plastid. The protein localises to the chloroplast thylakoid membrane. In terms of biological role, seems to be required for the assembly of the photosystem I complex. The polypeptide is Photosystem I assembly protein Ycf4 (Solanum bulbocastanum (Wild potato)).